The primary structure comprises 370 residues: D-aspartate oxidase (370 aa).

The N-terminal stretch at 1 to 18 (MPPRIIILGAGIIGLSTA) is a signal peptide. FAD is bound by residues Ile-13, Glu-42, Ala-63, Ser-64, and Gly-68. Residue Asn-207 is glycosylated (N-linked (GlcNAc...) asparagine). Residues Arg-308, Gly-338, and Tyr-339 each coordinate FAD.

Belongs to the DAMOX/DASOX family. As to quaternary structure, monomer. Requires FAD as cofactor.

It carries out the reaction D-aspartate + O2 + H2O = oxaloacetate + H2O2 + NH4(+). The enzyme catalyses D-glutamate + O2 + H2O = H2O2 + 2-oxoglutarate + NH4(+). Functionally, selectively catalyzes the oxidative deamination of acidic amino acids. Protects the organism from the toxicity of D-amino acids. Enables the organism to utilize D-amino acids as a source of nutrients. This is D-aspartate oxidase from Talaromyces thermophilus.